We begin with the raw amino-acid sequence, 200 residues long: Small ribosomal subunit protein mS26 (200 aa).

The N-terminal 27 residues, 1 to 27, are a transit peptide targeting the mitochondrion; it reads MLRALNRLAARPETRPPTPLLLPVRGR. The segment at 1-44 is disordered; it reads MLRALNRLAARPETRPPTPLLLPVRGRKTRHDPPAKSKVGRVQT. Lys159 carries the post-translational modification N6-acetyllysine.

Belongs to the mitochondrion-specific ribosomal protein mS26 family. As to quaternary structure, component of the mitochondrial ribosome small subunit (28S) which comprises a 12S rRNA and about 30 distinct proteins.

It localises to the mitochondrion. This is Small ribosomal subunit protein mS26 (Mrps26) from Mus musculus (Mouse).